The sequence spans 27 residues: Potassium channel toxin alpha-KTx 32.1 (27 aa).

2 cysteine pairs are disulfide-bonded: cysteine 5/cysteine 18 and cysteine 12/cysteine 25.

In terms of tissue distribution, expressed by the venom gland.

The protein resides in the secreted. In terms of biological role, blocker of voltage-gated potassium channels. Inhibits voltage-gated potassium channels Kv1.2/KCNA2 (Kd=0.96 nM) and Kv1.3/KCNA3 (Kd=1.3 nM). Does not inhibit Kv1.1/KCNA1, Kv1.5/KCNA5, Kv11.1/KCNH2/ERG1, KCa1.1/KCNMA1, KCa3.1/KCNN4, NaV1.5/SCN5A, NaV1.4/SCN4A or HV1/HVCN1. Strongly inhibits the expression of the activation markers interleukin-2 receptor and CD40 ligand/CD40LG in anti-CD3-activated CD4(+) TEM lymphocytes. The sequence is that of Potassium channel toxin alpha-KTx 32.1 from Centruroides margaritatus (Central American bark Scorpion).